A 583-amino-acid chain; its full sequence is Isocitrate dehydrogenase kinase/phosphatase (583 aa).

ATP contacts are provided by residues A315–M321 and K336. D371 is a catalytic residue.

This sequence belongs to the AceK family.

The protein localises to the cytoplasm. It carries out the reaction L-seryl-[isocitrate dehydrogenase] + ATP = O-phospho-L-seryl-[isocitrate dehydrogenase] + ADP + H(+). Bifunctional enzyme which can phosphorylate or dephosphorylate isocitrate dehydrogenase (IDH) on a specific serine residue. This is a regulatory mechanism which enables bacteria to bypass the Krebs cycle via the glyoxylate shunt in response to the source of carbon. When bacteria are grown on glucose, IDH is fully active and unphosphorylated, but when grown on acetate or ethanol, the activity of IDH declines drastically concomitant with its phosphorylation. This chain is Isocitrate dehydrogenase kinase/phosphatase, found in Salmonella paratyphi B (strain ATCC BAA-1250 / SPB7).